Consider the following 837-residue polypeptide: Mannosyl-oligosaccharide glucosidase (837 aa).

Basic residues predominate over residues 1–10 (MARGERRRRA). The Cytoplasmic segment spans residues 1–38 (MARGERRRRAVPAEGVRTAERAARGGPGRRDGRGGGPR). Residues 1-39 (MARGERRRRAVPAEGVRTAERAARGGPGRRDGRGGGPRS) are disordered. Residues 3–9 (RGERRRR) carry the Endoplasmic reticulum targeting motif. Positions 17-33 (RTAERAARGGPGRRDGR) are enriched in basic and acidic residues. Residues 39 to 59 (STAGGVALAVVVLSLALGMSG) form a helical; Signal-anchor for type II membrane protein membrane-spanning segment. The Lumenal segment spans residues 60-837 (RWVLAWYRAR…LVLLAMAEDY (778 aa)). The tract at residues 76–137 (SAPPVLPADS…PGTPKLRHTC (62 aa)) is required for endoplasmic reticulum targeting. Asp-583 functions as the Proton donor in the catalytic mechanism. Asn-657 carries an N-linked (GlcNAc...) asparagine glycan. Residue Glu-807 is the Proton acceptor of the active site.

This sequence belongs to the glycosyl hydrolase 63 family.

Its subcellular location is the endoplasmic reticulum membrane. It catalyses the reaction N(4)-(alpha-D-Glc-(1-&gt;2)-alpha-D-Glc-(1-&gt;3)-alpha-D-Glc-(1-&gt;3)-alpha-D-Man-(1-&gt;2)-alpha-D-Man-(1-&gt;2)-alpha-D-Man-(1-&gt;3)-[alpha-D-Man-(1-&gt;2)-alpha-D-Man-(1-&gt;3)-[alpha-D-Man-(1-&gt;2)-alpha-D-Man-(1-&gt;6)]-alpha-D-Man-(1-&gt;6)]-beta-D-Man-(1-&gt;4)-beta-D-GlcNAc-(1-&gt;4)-beta-D-GlcNAc)-L-asparaginyl-[protein] + H2O = N(4)-(alpha-D-Glc-(1-&gt;3)-alpha-D-Glc-(1-&gt;3)-alpha-D-Man-(1-&gt;2)-alpha-D-Man-(1-&gt;2)-alpha-D-Man-(1-&gt;3)-[alpha-D-Man-(1-&gt;2)-alpha-D-Man-(1-&gt;3)-[alpha-D-Man-(1-&gt;2)-alpha-D-Man-(1-&gt;6)]-alpha-D-Man-(1-&gt;6)]-beta-D-Man-(1-&gt;4)-beta-D-GlcNAc-(1-&gt;4)-beta-D-GlcNAc)-L-asparaginyl-[protein] + beta-D-glucose. It participates in glycan metabolism; N-glycan degradation. Inhibited by 1-deoxynojirimycin (40% inhibition) and N,N-dimethyl-deoxynojirimycin (85% inhibition). In the context of N-glycan degradation, cleaves the distal alpha 1,2-linked glucose residue from the Glc(3)Man(9)GlcNAc(2) oligosaccharide precursor in a highly specific manner. This is Mannosyl-oligosaccharide glucosidase from Homo sapiens (Human).